Consider the following 844-residue polypeptide: 3',5'-cyclic-AMP phosphodiesterase 4A (844 aa).

The segment at 1–124 is disordered; the sequence is MEPPAAPSER…RSPLDSQASP (124 aa). The residue at position 13 (Ser-13) is a Phosphoserine. Low complexity predominate over residues 36-46; sequence QPRTPIRIQQR. A compositionally biased stretch (basic and acidic residues) spans 51-78; the sequence is SAERSETERSPHRPIERADAVDTGDRPG. Polar residues predominate over residues 82–91; it reads TRMSWPSSFH. The residue at position 147 (Ser-147) is a Phosphoserine; by MAPKAPK2. Phosphoserine is present on residues Ser-152, Ser-160, and Ser-204. Residues 296-317 form a disordered region; the sequence is PSPTPRQRAFQQPPPSVLRQSQ. Residue Ser-333 is modified to Phosphoserine. Residues 343–672 enclose the PDEase domain; that stretch reads VKTDQEDLLA…DWYHSAIRQS (330 aa). Lys-344 is covalently cross-linked (Glycyl lysine isopeptide (Lys-Gly) (interchain with G-Cter in SUMO)). Catalysis depends on His-419, which acts as the Proton donor. Residue His-419 coordinates 3',5'-cyclic AMP. Residues His-419 and His-423 each coordinate AMP. 4 residues coordinate Zn(2+): His-423, His-459, Asp-460, and Asp-577. AMP-binding residues include Asp-460, Asp-577, Gln-628, and Phe-631. Asp-460 contacts Mg(2+). Asp-460 serves as a coordination point for Mn(2+). The 3',5'-cyclic AMP site is built by Gln-628 and Phe-631. 2 disordered regions span residues 668-690 and 818-844; these read AIRQ…PSLP and SACS…GDPA. Ser-672 and Ser-674 each carry phosphoserine. Residues 820–830 are compositionally biased toward polar residues; sequence CSGTSGDNSAI.

This sequence belongs to the cyclic nucleotide phosphodiesterase family. PDE4 subfamily. As to quaternary structure, interacts with LYN (via SH3 domain). Interacts with ARRB2. The cofactor is Zn(2+). It depends on Mg(2+) as a cofactor. Mn(2+) is required as a cofactor. Post-translationally, phosphorylated by MAPKAPK2 at Ser-147; it counteracts PKA-induced activation of PDE4A and modulates intracellular cAMP levels. Likely involved in cellular desensitization to cAMP signaling. Proteolytically cleaved by CASP3. As to expression, isoform 2 is testis specific.

The protein resides in the cytoplasm. It localises to the cytosol. Its subcellular location is the membrane. The enzyme catalyses 3',5'-cyclic AMP + H2O = AMP + H(+). The protein operates within purine metabolism; 3',5'-cyclic AMP degradation; AMP from 3',5'-cyclic AMP: step 1/1. Its activity is regulated as follows. Inhibited by rolipram. Hydrolyzes the second messenger 3',5'-cyclic AMP (cAMP), which is a key regulator of many important physiological processes. Its function is as follows. Efficiently hydrolyzes cAMP. This Rattus norvegicus (Rat) protein is 3',5'-cyclic-AMP phosphodiesterase 4A (Pde4a).